The chain runs to 81 residues: Large ribosomal subunit protein bL28 (81 aa).

The protein belongs to the bacterial ribosomal protein bL28 family.

In Gloeobacter violaceus (strain ATCC 29082 / PCC 7421), this protein is Large ribosomal subunit protein bL28.